A 122-amino-acid chain; its full sequence is MALNIENIIAEIKEASILELNDLVKAIEEEFGVTAAAPVAVAAAGAGEAAAAKDSFDIELTAAGDKKVGVIKVVREITGLGLKEAKELVDGAPNVIKEGVAAAEAEELKAKLEEAGASVTLK.

It belongs to the bacterial ribosomal protein bL12 family. As to quaternary structure, homodimer. Part of the ribosomal stalk of the 50S ribosomal subunit. Forms a multimeric L10(L12)X complex, where L10 forms an elongated spine to which 2 to 4 L12 dimers bind in a sequential fashion. Binds GTP-bound translation factors.

Forms part of the ribosomal stalk which helps the ribosome interact with GTP-bound translation factors. Is thus essential for accurate translation. This chain is Large ribosomal subunit protein bL12, found in Streptococcus sanguinis (strain SK36).